Consider the following 390-residue polypeptide: Queuine tRNA-ribosyltransferase (390 aa).

Residue Asp92 is the Proton acceptor of the active site. Residues 92–96 (DSGGF), Asp146, Gln195, and Gly222 each bind substrate. The tract at residues 253–259 (GVGTPED) is RNA binding. Catalysis depends on Asp272, which acts as the Nucleophile. The segment at 277–281 (TRNAR) is RNA binding; important for wobble base 34 recognition. Zn(2+) is bound by residues Cys310, Cys312, Cys315, and His354.

The protein belongs to the queuine tRNA-ribosyltransferase family. In terms of assembly, homodimer. Within each dimer, one monomer is responsible for RNA recognition and catalysis, while the other monomer binds to the replacement base PreQ1. Requires Zn(2+) as cofactor.

The catalysed reaction is 7-aminomethyl-7-carbaguanine + guanosine(34) in tRNA = 7-aminomethyl-7-carbaguanosine(34) in tRNA + guanine. It participates in tRNA modification; tRNA-queuosine biosynthesis. Functionally, catalyzes the base-exchange of a guanine (G) residue with the queuine precursor 7-aminomethyl-7-deazaguanine (PreQ1) at position 34 (anticodon wobble position) in tRNAs with GU(N) anticodons (tRNA-Asp, -Asn, -His and -Tyr). Catalysis occurs through a double-displacement mechanism. The nucleophile active site attacks the C1' of nucleotide 34 to detach the guanine base from the RNA, forming a covalent enzyme-RNA intermediate. The proton acceptor active site deprotonates the incoming PreQ1, allowing a nucleophilic attack on the C1' of the ribose to form the product. After dissociation, two additional enzymatic reactions on the tRNA convert PreQ1 to queuine (Q), resulting in the hypermodified nucleoside queuosine (7-(((4,5-cis-dihydroxy-2-cyclopenten-1-yl)amino)methyl)-7-deazaguanosine). This chain is Queuine tRNA-ribosyltransferase, found in Paracidovorax citrulli (strain AAC00-1) (Acidovorax citrulli).